The chain runs to 434 residues: MKLSHLLTSAVSVLSLGLTVEGHFSRSRNDAVGPKRPFKPLPYSHPRKKVCHVRSHGDGRDDSAFILSALKSCNNGGKVVFAEEKEYTIGTALDLTFLKHVDLEILGRIQFTNDTDYWQANSFKHTFQNATTFFQLGGEDVNVYGGGTLDGNGQIWYDLYAEDPLILRPILFGVIGLHGGTIGPLKLRYSPQWYQLVANSSDVLFDGIDISGYSKSENEAKNTDGWDTYRSKNIVIQNSVINNGDDCVSFKPNSTEILVQNLYCNGSHGISVGSLGQYIGEVDIVKNVLVYNISMYNASDMARIKVWPGVASAMSEDLQGGGGLGSVSNITYEDMYIENVDWAIEITQCYGQKNMTLCNEYPSNLTISDVYISNMYGTTSSARDPNIGTIVCSSPDVCSNIYVENIDVVSPSGTNDFICTNVNESLLQVNCTSG.

The N-terminal stretch at 1–22 (MKLSHLLTSAVSVLSLGLTVEG) is a signal peptide. N-linked (GlcNAc...) asparagine glycosylation is found at N113, N129, and N199. The stretch at 231-252 (SKNIVIQNSVINNGDDCVSFKP) is one PbH1 1 repeat. The Proton donor role is filled by D245. A disulfide bridge links C247 with C264. N-linked (GlcNAc...) asparagine glycosylation is found at N253 and N265. The stretch at 254-274 (STEILVQNLYCNGSHGISVGS) is one PbH1 2 repeat. H268 is a catalytic residue. N-linked (GlcNAc...) asparagine glycosylation is found at N292, N297, N329, N354, and N364. The stretch at 327 to 348 (VSNITYEDMYIENVDWAIEITQ) is one PbH1 3 repeat. One copy of the PbH1 4 repeat lies at 362–405 (PSNLTISDVYISNMYGTTSSARDPNIGTIVCSSPDVCSNIYVEN). A disulfide bridge links C392 with C398. N-linked (GlcNAc...) asparagine glycans are attached at residues N423 and N430.

Belongs to the glycosyl hydrolase 28 family.

It localises to the secreted. The catalysed reaction is [(1-&gt;4)-alpha-D-galacturonosyl](n) + H2O = alpha-D-galacturonate + [(1-&gt;4)-alpha-D-galacturonosyl](n-1). Its function is as follows. Specific in hydrolyzing the terminal glycosidic bond of polygalacturonic acid and oligogalacturonates. The sequence is that of Exopolygalacturonase X-1 (pgaX-1) from Emericella nidulans (strain FGSC A4 / ATCC 38163 / CBS 112.46 / NRRL 194 / M139) (Aspergillus nidulans).